A 212-amino-acid polypeptide reads, in one-letter code: DNA-directed RNA polymerase III subunit RPC8 (212 aa).

The residue at position 162 (serine 162) is a Phosphoserine. Residues 166 to 184 (RELEERAQLENEIEGKNEE) show a composition bias toward basic and acidic residues. Residues 166–194 (RELEERAQLENEIEGKNEETPQNEKPPAY) form a disordered region.

The protein belongs to the eukaryotic RPB7/RPC8 RNA polymerase subunit family. As to quaternary structure, component of the RNA polymerase III (Pol III) complex consisting of 17 subunits. RPC25/RPC8 and RPC17/RPC9 form a Pol III subcomplex.

Its subcellular location is the nucleus. DNA-dependent RNA polymerase catalyzes the transcription of DNA into RNA using the four ribonucleoside triphosphates as substrates. Specific peripheric component of RNA polymerase III which synthesizes small RNAs, such as 5S rRNA and tRNA. The RPC25/RPC8-RPC17/RPC9 subcomplex may bind Pol III transcripts emerging from the adjacent exit pore during elongation. The chain is DNA-directed RNA polymerase III subunit RPC8 (RPC25) from Saccharomyces cerevisiae (strain ATCC 204508 / S288c) (Baker's yeast).